The sequence spans 532 residues: All-trans-retinyl ester 13-cis isomerohydrolase (532 aa).

C112 carries S-palmitoyl cysteine; in membrane form lipidation. Fe cation-binding residues include H180, H241, and H313. Residue C329 is the site of S-palmitoyl cysteine; in membrane form attachment. H527 provides a ligand contact to Fe cation.

This sequence belongs to the carotenoid oxygenase family. The cofactor is Fe(2+). In terms of processing, palmitoylated. As to expression, predominantly expressed in brain. Expressed at a low level in the eye.

Its subcellular location is the cytoplasm. It is found in the cell membrane. It carries out the reaction an all-trans-retinyl ester + H2O = 13-cis-retinol + a fatty acid + H(+). The enzyme catalyses lutein = (3R,3'S)-zeaxanthin. Its function is as follows. Specifically generates 13-cis retinol, a stereoisomeric form of retinoic acid. Capable of catalyzing the isomerization of lutein to meso-zeaxanthin an eye-specific carotenoid. This is All-trans-retinyl ester 13-cis isomerohydrolase (rpe65b) from Danio rerio (Zebrafish).